Consider the following 201-residue polypeptide: Probable quinol oxidase subunit 3 (201 aa).

The next 5 membrane-spanning stretches (helical) occupy residues 20–40 (LGFW…FATL), 62–82 (LILI…IAIY), 91–111 (LMMF…GFEI), 133–153 (FFIL…WVIC), and 172–192 (FIVS…FTAV).

Belongs to the cytochrome c oxidase subunit 3 family.

Its subcellular location is the cell membrane. It carries out the reaction 2 a quinol + O2 = 2 a quinone + 2 H2O. Functionally, catalyzes quinol oxidation with the concomitant reduction of oxygen to water. This Staphylococcus epidermidis (strain ATCC 35984 / DSM 28319 / BCRC 17069 / CCUG 31568 / BM 3577 / RP62A) protein is Probable quinol oxidase subunit 3 (qoxC).